We begin with the raw amino-acid sequence, 313 residues long: Homoserine O-acetyltransferase (313 aa).

The Acyl-thioester intermediate role is filled by Cys-144. Residues Lys-165 and Ser-194 each coordinate substrate. The Proton acceptor role is filled by His-236. The active site involves Glu-238. Arg-250 serves as a coordination point for substrate.

The protein belongs to the MetA family.

The protein resides in the cytoplasm. It carries out the reaction L-homoserine + acetyl-CoA = O-acetyl-L-homoserine + CoA. The protein operates within amino-acid biosynthesis; L-methionine biosynthesis via de novo pathway; O-acetyl-L-homoserine from L-homoserine: step 1/1. Its function is as follows. Transfers an acetyl group from acetyl-CoA to L-homoserine, forming acetyl-L-homoserine. The polypeptide is Homoserine O-acetyltransferase (Jannaschia sp. (strain CCS1)).